Here is a 190-residue protein sequence, read N- to C-terminus: ADP-ribosylation factor-like protein 6 (190 aa).

The N-myristoyl glycine moiety is linked to residue G2. GTP contacts are provided by residues 24–31, 69–73, and 130–133; these read GLDNSGKT, DMAGQ, and NKMD.

It belongs to the small GTPase superfamily. Arf family. Specifically expressed in ciliated cells.

The protein resides in the cytoplasm. The protein is ADP-ribosylation factor-like protein 6 of Caenorhabditis elegans.